Consider the following 387-residue polypeptide: TPR repeat-containing protein SYNPCC7002_A0425 (387 aa).

9 TPR repeats span residues 63-96, 97-130, 132-164, 166-198, 200-232, 233-266, 267-300, 302-334, and 336-368; these read LNALLEQGNEQLTNRNFAQAVQHYRQALTLEANN, ARIHGALGYALSQLGNYSEAVTAYRRATELEDDN, EFFNALGFNLAQSGDNRSAINAYQRATQLQPNN, AYSLGLATVQFRAGDYDQALVAYRKVLAKDSNN, MALQNSLTSLLQLGRNQEAAVLFPDLLRQRPND, AELRIKAAVTWFGLNDRDQAIAFLEEARRLSTRD, SAMQIRVGKIYETQNLLPQAIAAYEQASFVDPQS, EAFALYGSAAMKTEDYINAIIAYRALTELSPTD, and AAFYNFAVALQGRRRSREALEALEMARDLYQQR.

In Picosynechococcus sp. (strain ATCC 27264 / PCC 7002 / PR-6) (Agmenellum quadruplicatum), this protein is TPR repeat-containing protein SYNPCC7002_A0425.